Reading from the N-terminus, the 373-residue chain is Transcription factor NF-E2 45 kDa subunit (373 aa).

A required for interaction with MAPK8 region spans residues 1-83; it reads MSPCPPQQSR…SGFPLPPPPY (83 aa). Residues 1–206 are transactivation domain; it reads MSPCPPQQSR…PAAETPLALE (206 aa). 2 short sequence motifs (PXY motif) span residues 61 to 65 and 79 to 83; these read PPTTY and PPPPY. The interval 127-150 is disordered; it reads LDIGLPAGPPKPQEDPESDSGLSL. S157 carries the phosphoserine; by MAPK8 modification. Phosphoserine; by PKA is present on S170. Residues 205–226 are disordered; the sequence is LEPSSGPVRAKPTARGEAGSRD. A bZIP domain is found at 266–329; the sequence is LVRDIRRRGK…EVMRQQLTEL (64 aa). The tract at residues 268–287 is basic motif; that stretch reads RDIRRRGKNKVAAQNCRKRK. A leucine-zipper region spans residues 291–298; the sequence is IVQLEREL. A Glycyl lysine isopeptide (Lys-Gly) (interchain with G-Cter in SUMO1) cross-link involves residue K368.

This sequence belongs to the bZIP family. CNC subfamily. As to quaternary structure, homodimer; can bind DNA as a homodimer. Erythroid transcription activator nuclear factor erythroid-derived 2 (NF-E2), composed of a heterodimer of NFE2 and MAFK, possesses transactivation activity on beta-globin. Also forms high affinity heterodimer with MAFG; the interaction promotes erythropoiesis. Interacts (via the PXY motif 1) with ITCH (via the WW 1 domain); the interaction promotes 'Lys63'-linked ubiquitination of NFE2, translocates it to the cytoplasm and inhibits its transactivation activity. Interacts with KMT2D/MLL2; the interaction promotes transactivation of the beta-globin locus. Interacts with MAPK8 (phosphorylated form); the interaction leads to phosphorylation of NFE2 in undifferentiated cells. Phosphorylated on serine residues. In undifferentiated erythrocytes, phosphorylated by MAPK8 which then leads to ubiquitination and protein degradation. In terms of processing, sumoylated. Sumoylation is required for translocation to nuclear bodies PODs, anchoring to the gene loci, and transactivation of the beta-globin gene. Post-translationally, ubiquitinated mainly by 'Lys63'-linked ubiquitin. Polyubiquitination with 'Lys63'-linked ubiquitin by ITCH retains NFE2 in the cytoplasm preventing its transactivation activity. In undifferentiated erythrocyte, ubiquitinated after MAPK8-mediatd phosphorylation leading to protein degradation. As to expression, expressed in hematopoietic cells and also in colon and testis.

The protein resides in the nucleus. The protein localises to the PML body. Its subcellular location is the cytoplasm. Its function is as follows. Component of the NF-E2 complex essential for regulating erythroid and megakaryocytic maturation and differentiation. Binds to the hypersensitive site 2 (HS2) of the beta-globin control region (LCR). This subunit (NFE2) recognizes the TCAT/C sequence of the AP-1-like core palindrome present in a number of erythroid and megakaryocytic gene promoters. Requires MAFK or other small MAF proteins for binding to the NF-E2 motif. May play a role in all aspects of hemoglobin production from globin and heme synthesis to procurement of iron. In Homo sapiens (Human), this protein is Transcription factor NF-E2 45 kDa subunit (NFE2).